A 363-amino-acid chain; its full sequence is Inositol-3-phosphate synthase (363 aa).

NAD(+)-binding residues include Asp68, Ala127, Tyr147, Ser190, Asp225, and Lys238.

The protein belongs to the myo-inositol 1-phosphate synthase family. Monomer. The cofactor is NAD(+).

The catalysed reaction is D-glucose 6-phosphate = 1D-myo-inositol 3-phosphate. Its pathway is polyol metabolism; myo-inositol biosynthesis; myo-inositol from D-glucose 6-phosphate: step 1/2. Key enzyme in myo-inositol biosynthesis pathway that catalyzes the conversion of glucose 6-phosphate to 1D-myo-inositol 3-phosphate in a NAD-dependent manner. Plays a key role in oxidative stress resistance as its product is the precursor of the protective antioxidant mycothiol (MSH or AcCys-GlcN-Ins). The sequence is that of Inositol-3-phosphate synthase from Corynebacterium glutamicum (strain ATCC 13032 / DSM 20300 / JCM 1318 / BCRC 11384 / CCUG 27702 / LMG 3730 / NBRC 12168 / NCIMB 10025 / NRRL B-2784 / 534).